The sequence spans 397 residues: Arginine biosynthesis bifunctional protein ArgJ (397 aa).

6 residues coordinate substrate: Thr-147, Lys-173, Thr-184, Glu-270, Asn-392, and Thr-397. Thr-184 functions as the Nucleophile in the catalytic mechanism.

The protein belongs to the ArgJ family. As to quaternary structure, heterotetramer of two alpha and two beta chains.

It is found in the cytoplasm. It carries out the reaction N(2)-acetyl-L-ornithine + L-glutamate = N-acetyl-L-glutamate + L-ornithine. It catalyses the reaction L-glutamate + acetyl-CoA = N-acetyl-L-glutamate + CoA + H(+). It participates in amino-acid biosynthesis; L-arginine biosynthesis; L-ornithine and N-acetyl-L-glutamate from L-glutamate and N(2)-acetyl-L-ornithine (cyclic): step 1/1. The protein operates within amino-acid biosynthesis; L-arginine biosynthesis; N(2)-acetyl-L-ornithine from L-glutamate: step 1/4. Functionally, catalyzes two activities which are involved in the cyclic version of arginine biosynthesis: the synthesis of N-acetylglutamate from glutamate and acetyl-CoA as the acetyl donor, and of ornithine by transacetylation between N(2)-acetylornithine and glutamate. The sequence is that of Arginine biosynthesis bifunctional protein ArgJ from Staphylococcus epidermidis (strain ATCC 35984 / DSM 28319 / BCRC 17069 / CCUG 31568 / BM 3577 / RP62A).